A 395-amino-acid polypeptide reads, in one-letter code: Flagellin A (395 aa).

Belongs to the bacterial flagellin family.

It localises to the secreted. Its subcellular location is the bacterial flagellum. In terms of biological role, flagellin is the subunit protein which polymerizes to form the filaments of bacterial flagella. Homomer of FlaA is able to form a functional filament. The polypeptide is Flagellin A (flaA) (Rhizobium meliloti (Ensifer meliloti)).